Here is a 465-residue protein sequence, read N- to C-terminus: MMKVVSPRTRSDSITEKVFRRVYSNFNISTVEDEYIHRQRSSDYEKESRLRKRGLEDKEEVMEMEQMGAERIKTVLILMSDTGGGHRASAEAIRDAFKIEFGDDYRIIIKDVWKEYTGWPLNDMERQYKFMVKHVGLWSVAFHGTSPKWIHKSYLSALAAYYAKEIEAGLMEYKPDIIISVHPLMQHIPLWVMKWQGLHKKVIFVTVITDLNTCHRTWFHHGVSRCYCPSKEVAKRALVDGLDDSQIRVFGLPVRPSFPRTILNKNELRKELEIDLNLPAVLLMGGGEGMGPVQKTALALGDSLYNSKESNPIGQLIVICGRNKVLASTLASHEWKIPVKVRGFETQMEKWMGACDCIITKAGPGTIAEALICGLPIILNDYIPGQEKGNVPYVVDNGAGVFTRSPKETAKIVADWFSNNKEELKKMSENALKLSQPEAVFDIVKDIHHLSQQQQRIPLFNEFSY.

Residues H86, R255, 365–369 (GTIAE), and E387 contribute to the UDP site.

It belongs to the glycosyltransferase 28 family. As to expression, expressed mainly in roots. Detected in flowers, leaves, stems, siliques and pollen tubes.

The protein localises to the plastid. The protein resides in the chloroplast outer membrane. The catalysed reaction is a 1,2-diacyl-sn-glycerol + UDP-alpha-D-galactose = a 1,2-diacyl-3-O-(beta-D-galactosyl)-sn-glycerol + UDP + H(+). It catalyses the reaction 1,2-di-(9Z,12Z-octadecadienoyl)-sn-glycerol + UDP-alpha-D-galactose = 1,2-di-(9Z,12Z-octadecadienoyl)-3-beta-D-galactosyl-sn-glycerol + UDP + H(+). The enzyme catalyses 1-(9Z-octadecenoyl)-2-hexadecanoyl-sn-glycerol + UDP-alpha-D-galactose = 1-(9Z-octadecenoyl)-2-hexadecanoyl-3-beta-D-galactosyl-sn-glycerol + UDP + H(+). It carries out the reaction 1,2-di-(9Z-octadecenoyl)-sn-glycerol + UDP-alpha-D-galactose = 1,2-di-(9Z-octadecenoyl)-3-beta-D-galactosyl-sn-glycerol + UDP + H(+). Its activity is regulated as follows. Inhibited by galvestine-1. In terms of biological role, involved in the synthesis of monogalactosyldiacylglycerol, the major structural component of photosynthetic membranes and in the chloroplast envelope biogenesis. Can use both prokaryotic (18:1/16:0) or eukaryotic (18:2/18:2) 1,2-diacylglycerol species, but operates with some preference for the eukaryotic one. Plays a minor role in galactolipid synthesis in chloroplasts. Is essential for membrane lipid remodeling in phosphate-starved roots. Acts as the major factor involved in digalactosyldiacylglycerol (DGDG) biosynthesis in phosphate-starved roots. Does not seem to be required for plant growth under nutrient-sufficient conditions. Required for membrane lipid remodeling in plants grown in acidic conditions. The polypeptide is Monogalactosyldiacylglycerol synthase 3, chloroplastic (Arabidopsis thaliana (Mouse-ear cress)).